Here is a 62-residue protein sequence, read N- to C-terminus: Potassium channel toxin alpha-KTx 22.1 (62 aa).

The signal sequence occupies residues 1-18 (MQKLFIVFVLFCILRLDA). Cystine bridges form between Cys-28–Cys-46, Cys-33–Cys-59, and Cys-37–Cys-61.

The protein belongs to the short scorpion toxin superfamily. Potassium channel inhibitor family. Alpha-KTx 22 subfamily. As to expression, expressed by the venom gland.

The protein resides in the secreted. Functionally, may block potassium channels. The chain is Potassium channel toxin alpha-KTx 22.1 from Olivierus martensii (Manchurian scorpion).